Reading from the N-terminus, the 663-residue chain is DNA ligase (663 aa).

NAD(+)-binding positions include Asp34–Asp38, Ser83–Leu84, and Glu114. The active-site N6-AMP-lysine intermediate is Lys116. Positions 137, 171, 286, and 310 each coordinate NAD(+). Cys404, Cys407, Cys422, and Cys427 together coordinate Zn(2+). Residues Thr585–Gly663 form the BRCT domain.

It belongs to the NAD-dependent DNA ligase family. LigA subfamily. It depends on Mg(2+) as a cofactor. Requires Mn(2+) as cofactor.

It catalyses the reaction NAD(+) + (deoxyribonucleotide)n-3'-hydroxyl + 5'-phospho-(deoxyribonucleotide)m = (deoxyribonucleotide)n+m + AMP + beta-nicotinamide D-nucleotide.. Functionally, DNA ligase that catalyzes the formation of phosphodiester linkages between 5'-phosphoryl and 3'-hydroxyl groups in double-stranded DNA using NAD as a coenzyme and as the energy source for the reaction. It is essential for DNA replication and repair of damaged DNA. This is DNA ligase from Brachyspira hyodysenteriae (strain ATCC 49526 / WA1).